The primary structure comprises 278 residues: Non-haem bromoperoxidase BPO-A2 (278 aa).

Positions 26-264 constitute an AB hydrolase-1 domain; the sequence is PVVLIHGFPL…GAPHGLLWTH (239 aa). Residues Ser99, Asp229, and His258 contribute to the active site.

It belongs to the AB hydrolase superfamily. Bacterial non-heme haloperoxidase / perhydrolase family. In terms of assembly, homotrimer.

In terms of biological role, may be a chlorinating enzyme involved in 7-chlorotetracycline biosynthesis. This Kitasatospora aureofaciens (Streptomyces aureofaciens) protein is Non-haem bromoperoxidase BPO-A2 (bpoA2).